A 189-amino-acid polypeptide reads, in one-letter code: Protein GrpE (189 aa).

Residues 1–22 (MKEQQKETEQNIEEINDETVTE) are disordered. Residues 10–22 (QNIEEINDETVTE) show a composition bias toward acidic residues.

Belongs to the GrpE family. As to quaternary structure, homodimer.

The protein resides in the cytoplasm. Participates actively in the response to hyperosmotic and heat shock by preventing the aggregation of stress-denatured proteins, in association with DnaK and GrpE. It is the nucleotide exchange factor for DnaK and may function as a thermosensor. Unfolded proteins bind initially to DnaJ; upon interaction with the DnaJ-bound protein, DnaK hydrolyzes its bound ATP, resulting in the formation of a stable complex. GrpE releases ADP from DnaK; ATP binding to DnaK triggers the release of the substrate protein, thus completing the reaction cycle. Several rounds of ATP-dependent interactions between DnaJ, DnaK and GrpE are required for fully efficient folding. This chain is Protein GrpE, found in Leuconostoc citreum (strain KM20).